The chain runs to 61 residues: Small ribosomal subunit protein uS14 (61 aa).

Zn(2+) contacts are provided by C24, C27, C40, and C43.

It belongs to the universal ribosomal protein uS14 family. Zinc-binding uS14 subfamily. In terms of assembly, part of the 30S ribosomal subunit. Contacts proteins S3 and S10. It depends on Zn(2+) as a cofactor.

Functionally, binds 16S rRNA, required for the assembly of 30S particles and may also be responsible for determining the conformation of the 16S rRNA at the A site. The polypeptide is Small ribosomal subunit protein uS14 (Borreliella burgdorferi (strain ATCC 35210 / DSM 4680 / CIP 102532 / B31) (Borrelia burgdorferi)).